We begin with the raw amino-acid sequence, 223 residues long: Bone marrow proteoglycan (223 aa).

A signal peptide spans 1–16 (MKFPLLLALLVGGASA). Positions 17–106 (LHLSSETSDS…TSLMGDSGCK (90 aa)) are cleaved as a propeptide — acidic. Residues 20–81 (SSETSDSKSP…PGDEGAVSGQ (62 aa)) form a disordered region. A glycan (O-linked (GalNAc...) threonine; partial) is linked at Thr23. A glycan (O-linked (GalNAc...) serine) is linked at Ser24. Residue Ser66 is glycosylated (O-linked (Xyl...) (chondroitin sulfate) serine). Residues 124 to 223 (SVCRRCYRGT…VKRRPFICSY (100 aa)) form the C-type lectin domain. 2 disulfides stabilise this stretch: Cys126–Cys221 and Cys198–Cys213.

Nitrated.

It localises to the secreted. Functionally, cytotoxin and helminthotoxin. MBP also induces non-cytolytic histamine release from basophils. It is involved in antiparasitic defense mechanisms and immune hypersensitivity reactions. The protein is Bone marrow proteoglycan (Prg2) of Mus musculus (Mouse).